The following is a 116-amino-acid chain: Proline-rich protein 9 (116 aa).

This chain is Proline-rich protein 9 (PRR9), found in Homo sapiens (Human).